The following is a 371-amino-acid chain: Histidinol-phosphate aminotransferase (371 aa).

Position 228 is an N6-(pyridoxal phosphate)lysine (Lys228).

This sequence belongs to the class-II pyridoxal-phosphate-dependent aminotransferase family. Histidinol-phosphate aminotransferase subfamily. In terms of assembly, homodimer. Requires pyridoxal 5'-phosphate as cofactor.

The catalysed reaction is L-histidinol phosphate + 2-oxoglutarate = 3-(imidazol-4-yl)-2-oxopropyl phosphate + L-glutamate. Its pathway is amino-acid biosynthesis; L-histidine biosynthesis; L-histidine from 5-phospho-alpha-D-ribose 1-diphosphate: step 7/9. This chain is Histidinol-phosphate aminotransferase, found in Thermosynechococcus vestitus (strain NIES-2133 / IAM M-273 / BP-1).